The chain runs to 633 residues: Protein arginine N-methyltransferase 5 (633 aa).

The SAM-dependent MTase PRMT-type domain maps to 304-611 (LQSPLQPLMD…NNGKKVWYEW (308 aa)). Y320 contributes to the S-adenosyl-L-methionine binding site. Residue F323 coordinates a protein. S-adenosyl-L-methionine-binding positions include 329 to 330 (KY), E388, and 414 to 416 (GDM). Residues E431 and E440 each coordinate a protein. Catalysis depends on proton donor/acceptor residues E431 and E440. E440 contributes to the S-adenosyl-L-methionine binding site.

This sequence belongs to the class I-like SAM-binding methyltransferase superfamily. Protein arginine N-methyltransferase family. As to quaternary structure, heterotetramer; dimer of heterodimer with wdr77. Interacts with wee2-a; this interaction is disrupted upon activation of the DNA replication checkpoint. In terms of tissue distribution, detected in egg (at protein level).

The protein localises to the cytoplasm. Its subcellular location is the nucleus. It localises to the cytosol. The enzyme catalyses L-arginyl-[protein] + 2 S-adenosyl-L-methionine = N(omega),N(omega)'-dimethyl-L-arginyl-[protein] + 2 S-adenosyl-L-homocysteine + 2 H(+). Its function is as follows. Arginine methyltransferase that can both catalyze the formation of omega-N monomethylarginine (MMA) and symmetrical dimethylarginine (sDMA), with a preference for the formation of MMA. Specifically mediates the symmetrical dimethylation of arginine residues in the small nuclear ribonucleoproteins; such methylation being required for the assembly and biogenesis of snRNP core particles. Methylates the arginine in the motif G-R-G-X-G in its substrates histone H2A, H2AX and H4, producing both monomethylated and symmetrically dimethylated 'Arg-3'. Methylates nucleoplasmin at 'Arg-192', producing both monomethylated and symmetrically dimethylated 'Arg-192'. Involved in the DNA replication checkpoint. Promotes entry into mitosis by promoting the proteasomal degradation of wee2-a. May act as a transcriptional corepressor in CRY1-mediated repression of the core circadian component PER1. Involved in spliceosome maturation and mRNA splicing. This chain is Protein arginine N-methyltransferase 5 (prmt5), found in Xenopus laevis (African clawed frog).